The primary structure comprises 751 residues: Lysine decarboxylase LdcA (751 aa).

The protein belongs to the Orn/Lys/Arg decarboxylase class-I family. In terms of assembly, homodecamer.

The enzyme catalyses L-lysine + H(+) = cadaverine + CO2. Its function is as follows. Plays an essential role in lysine utilization by acting as a lysine decarboxylase. The polypeptide is Lysine decarboxylase LdcA (Pseudomonas aeruginosa (strain ATCC 15692 / DSM 22644 / CIP 104116 / JCM 14847 / LMG 12228 / 1C / PRS 101 / PAO1)).